A 468-amino-acid chain; its full sequence is Lactate utilization protein B (468 aa).

4Fe-4S ferredoxin-type domains lie at 303–333 (GTQF…GHAY) and 352–381 (YENY…LHEL). [4Fe-4S] cluster-binding residues include cysteine 312, cysteine 315, cysteine 318, cysteine 322, cysteine 365, cysteine 368, and cysteine 372. Positions 442–468 (PAWTDSKDLPQPNKQTVRDWFKKRGNA) are disordered. The segment covering 457–468 (TVRDWFKKRGNA) has biased composition (basic and acidic residues).

It belongs to the LutB/YkgF family.

Is involved in L-lactate degradation and allows cells to grow with lactate as the sole carbon source. Has probably a role as an electron transporter during oxidation of L-lactate. The protein is Lactate utilization protein B of Exiguobacterium sp. (strain ATCC BAA-1283 / AT1b).